The chain runs to 620 residues: Translation initiation factor IF-2 (620 aa).

The tr-type G domain maps to 126 to 295 (KRPPIVTIMG…IVTAEIMELK (170 aa)). The tract at residues 135-142 (GHVDHGKT) is G1. Position 135–142 (135–142 (GHVDHGKT)) interacts with GTP. The interval 160 to 164 (NITQS) is G2. The G3 stretch occupies residues 181–184 (DTPG). Residues 181-185 (DTPGH) and 235-238 (NKMD) each bind GTP. A G4 region spans residues 235–238 (NKMD). The G5 stretch occupies residues 271-273 (SAL).

This sequence belongs to the TRAFAC class translation factor GTPase superfamily. Classic translation factor GTPase family. IF-2 subfamily.

It localises to the cytoplasm. One of the essential components for the initiation of protein synthesis. Protects formylmethionyl-tRNA from spontaneous hydrolysis and promotes its binding to the 30S ribosomal subunits. Also involved in the hydrolysis of GTP during the formation of the 70S ribosomal complex. The polypeptide is Translation initiation factor IF-2 (Malacoplasma penetrans (strain HF-2) (Mycoplasma penetrans)).